The sequence spans 268 residues: GTP cyclohydrolase FolE2 (268 aa).

The protein belongs to the GTP cyclohydrolase IV family.

The enzyme catalyses GTP + H2O = 7,8-dihydroneopterin 3'-triphosphate + formate + H(+). It functions in the pathway cofactor biosynthesis; 7,8-dihydroneopterin triphosphate biosynthesis; 7,8-dihydroneopterin triphosphate from GTP: step 1/1. Converts GTP to 7,8-dihydroneopterin triphosphate. This chain is GTP cyclohydrolase FolE2, found in Ralstonia nicotianae (strain ATCC BAA-1114 / GMI1000) (Ralstonia solanacearum).